The following is a 693-amino-acid chain: Heat shock protein homolog SSE2 (693 aa).

Positions 653 to 693 are disordered; that stretch reads LRANQETSKMNDIAEKLAEQRRARAASDDSDDNNDENMDLD. Over residues 664 to 679 the composition is skewed to basic and acidic residues; the sequence is DIAEKLAEQRRARAAS. Residues 680–693 show a composition bias toward acidic residues; that stretch reads DDSDDNNDENMDLD.

Belongs to the heat shock protein 70 family.

In terms of biological role, has a calcium-dependent calmodulin-binding activity. The chain is Heat shock protein homolog SSE2 (SSE2) from Saccharomyces cerevisiae (strain ATCC 204508 / S288c) (Baker's yeast).